The primary structure comprises 209 residues: Molybdenum cofactor guanylyltransferase (209 aa).

GTP contacts are provided by residues 13–15 (LAG), K26, N54, D72, and D107. D107 contacts Mg(2+).

Belongs to the MobA family. As to quaternary structure, monomer. Mg(2+) is required as a cofactor.

Its subcellular location is the cytoplasm. It carries out the reaction Mo-molybdopterin + GTP + H(+) = Mo-molybdopterin guanine dinucleotide + diphosphate. Its function is as follows. Transfers a GMP moiety from GTP to Mo-molybdopterin (Mo-MPT) cofactor (Moco or molybdenum cofactor) to form Mo-molybdopterin guanine dinucleotide (Mo-MGD) cofactor. The chain is Molybdenum cofactor guanylyltransferase from Nitrobacter hamburgensis (strain DSM 10229 / NCIMB 13809 / X14).